Reading from the N-terminus, the 506-residue chain is Maturase K (506 aa).

The protein belongs to the intron maturase 2 family. MatK subfamily.

It localises to the plastid. It is found in the chloroplast. In terms of biological role, usually encoded in the trnK tRNA gene intron. Probably assists in splicing its own and other chloroplast group II introns. The polypeptide is Maturase K (Lathyrus aphaca (Yellow vetchling)).